The sequence spans 255 residues: FMR1 neighbor protein (255 aa).

The Cytoplasmic portion of the chain corresponds to 1–68; that stretch reads MSSHRRKAKG…ESLKMRVSKP (68 aa). The chain crosses the membrane as a helical span at residues 69–89; sequence FGMLMLSIWILLFVCYYLSYY. At 90-183 the chain is on the extracellular side; it reads LCSGSSYFVL…FAPFRDVPKQ (94 aa). Residues 125 to 184 form the P-type domain; the sequence is LLNFFFPTTCNLRENQVAKPCNELQDLSESECLRHKCCFSSSGTTSFKCFAPFRDVPKQM. The helical transmembrane segment at 184–204 threads the bilayer; that stretch reads MMQMFGLGAISLILVCLPIYC. Residues 205 to 255 lie on the Cytoplasmic side of the membrane; the sequence is RSLFWRSEPADDLQRQDNRVVTGLKKQRRKRKRKSEMLQKAARGREEHGDE. The disordered stretch occupies residues 220 to 255; sequence QDNRVVTGLKKQRRKRKRKSEMLQKAARGREEHGDE. Residues 229 to 238 show a composition bias toward basic residues; that stretch reads KKQRRKRKRK.

Testis-specific. Expressed in melanoma, sarcoma, lung, breast, bladder, esophageal and ovarian cancers.

Its subcellular location is the membrane. This Homo sapiens (Human) protein is FMR1 neighbor protein.